The following is a 205-amino-acid chain: Anaerobic dimethyl sulfoxide reductase chain B (205 aa).

3 consecutive 4Fe-4S ferredoxin-type domains span residues 5 to 33, 59 to 89, and 90 to 119; these read YGFFIDSSRCAGCKTCELACKDYKDLTPE, FAYYLSISCNHCEDPACTKVCPSGAMHKRED, and GFVVVDEDVCIGCRYCHMACPYGAPQYNET. 16 residues coordinate [4Fe-4S] cluster: cysteine 14, cysteine 17, cysteine 20, cysteine 24, cysteine 67, cysteine 70, cysteine 75, cysteine 79, cysteine 99, cysteine 102, cysteine 105, cysteine 109, cysteine 126, cysteine 129, cysteine 141, and cysteine 145. Residues 184–205 are disordered; that stretch reads KPNANSRPTGDTTGYLANPKEV. A compositionally biased stretch (polar residues) spans 186-195; the sequence is NANSRPTGDT.

In terms of assembly, heterotrimeric enzyme composed of a catalytic heterodimer (DmsAB) and a membrane anchor protein (DmsC). [4Fe-4S] cluster is required as a cofactor.

In terms of biological role, electron transfer subunit of the terminal reductase during anaerobic growth on various sulfoxide and N-oxide compounds. The sequence is that of Anaerobic dimethyl sulfoxide reductase chain B (dmsB) from Shigella flexneri.